The following is a 482-amino-acid chain: MAEDVSSGEQTEDQAGQPLLNGEIIASNGDKCQFRTYKRRWFVLGVICLLSCTNAMLWISFAPVADVTASFFKCSLDVVNYLSLVYLIIAIPVGFGASWLIDTLGLKYAIVFSSWLNMIGSIIRCGAIVPYLNPSGSYTGIYYLFTGQSLCAIAQPLVLFVPAKLASVWFPEHQRATANMIASMSNPLGVLLANIISPSVVTKEEYIAHMLGIYTVPAIAACILATAGIRAKSPPTPPSASAFNSASEPFIAGIRQLLTNRAYVILMLCFGAGIGIFTAISSFLEQILCFRGYSNLFAGVCGALFIFFGFIGAFVCGLYVDRTKKFKEVVKTCFALTALTSIAFALVINFREQTVLVACVCSLLGLFGFAISPVGMELAVECSYPVGEGSSTGLAFISGQIQGIIYMILFQKLTRPFATSGPSPCGMNQTEIYDWSTSMLVMAALCSFGSCIFIIFFHTKYKRLLAEVNFNGLKEELNTHET.

12 helical membrane passes run 41–61 (WFVL…WISF), 81–101 (YLSL…SWLI), 109–129 (AIVF…GAIV), 150–170 (LCAI…SVWF), 181–201 (IASM…PSVV), 206–226 (YIAH…ILAT), 264–284 (VILM…SSFL), 296–316 (LFAG…AFVC), 330–350 (VKTC…VINF), 355–375 (VLVA…SPVG), 390–410 (SSTG…MILF), and 437–457 (TSML…IIFF).

This sequence belongs to the major facilitator superfamily.

Its subcellular location is the membrane. The sequence is that of Solute carrier family 49 member A3 (slc49a3) from Xenopus tropicalis (Western clawed frog).